The chain runs to 338 residues: tRNA N6-adenosine threonylcarbamoyltransferase (338 aa).

The Fe cation site is built by histidine 114 and histidine 118. Substrate is bound by residues 136-140 (LVSGG), aspartate 169, glycine 182, aspartate 186, and asparagine 275. Aspartate 301 is a binding site for Fe cation.

This sequence belongs to the KAE1 / TsaD family. Requires Fe(2+) as cofactor.

The protein resides in the cytoplasm. It catalyses the reaction L-threonylcarbamoyladenylate + adenosine(37) in tRNA = N(6)-L-threonylcarbamoyladenosine(37) in tRNA + AMP + H(+). In terms of biological role, required for the formation of a threonylcarbamoyl group on adenosine at position 37 (t(6)A37) in tRNAs that read codons beginning with adenine. Is involved in the transfer of the threonylcarbamoyl moiety of threonylcarbamoyl-AMP (TC-AMP) to the N6 group of A37, together with TsaE and TsaB. TsaD likely plays a direct catalytic role in this reaction. The polypeptide is tRNA N6-adenosine threonylcarbamoyltransferase (Streptococcus equi subsp. zooepidemicus (strain MGCS10565)).